A 557-amino-acid chain; its full sequence is Aerobic glycerol-3-phosphate dehydrogenase (557 aa).

FAD is bound at residue 21–49 (DVVIIGGGITGAGIALDASQRGMKVALVE).

The protein belongs to the FAD-dependent glycerol-3-phosphate dehydrogenase family. FAD is required as a cofactor.

It is found in the cytoplasm. It carries out the reaction a quinone + sn-glycerol 3-phosphate = dihydroxyacetone phosphate + a quinol. The protein operates within polyol metabolism; glycerol degradation via glycerol kinase pathway; glycerone phosphate from sn-glycerol 3-phosphate (aerobic route): step 1/1. The sequence is that of Aerobic glycerol-3-phosphate dehydrogenase (glpD) from Staphylococcus haemolyticus (strain JCSC1435).